The chain runs to 101 residues: Urease subunit beta (101 aa).

The protein belongs to the urease beta subunit family. Heterotrimer of UreA (gamma), UreB (beta) and UreC (alpha) subunits. Three heterotrimers associate to form the active enzyme.

It is found in the cytoplasm. It catalyses the reaction urea + 2 H2O + H(+) = hydrogencarbonate + 2 NH4(+). The protein operates within nitrogen metabolism; urea degradation; CO(2) and NH(3) from urea (urease route): step 1/1. This chain is Urease subunit beta, found in Roseobacter denitrificans (strain ATCC 33942 / OCh 114) (Erythrobacter sp. (strain OCh 114)).